Here is a 256-residue protein sequence, read N- to C-terminus: Pimeloyl-[acyl-carrier protein] methyl ester esterase (256 aa).

The AB hydrolase-1 domain maps to 15 to 242 (HLVLLHGWGL…AAHAPFISHP (228 aa)). Residues Trp-22, 82-83 (SL), and 143-147 (FLALQ) contribute to the substrate site. Ser-82 serves as the catalytic Nucleophile. Residues Asp-207 and His-235 contribute to the active site. His-235 provides a ligand contact to substrate.

This sequence belongs to the AB hydrolase superfamily. Carboxylesterase BioH family. As to quaternary structure, monomer.

It localises to the cytoplasm. The enzyme catalyses 6-carboxyhexanoyl-[ACP] methyl ester + H2O = 6-carboxyhexanoyl-[ACP] + methanol + H(+). The protein operates within cofactor biosynthesis; biotin biosynthesis. The physiological role of BioH is to remove the methyl group introduced by BioC when the pimeloyl moiety is complete. It allows to synthesize pimeloyl-ACP via the fatty acid synthetic pathway through the hydrolysis of the ester bonds of pimeloyl-ACP esters. The sequence is that of Pimeloyl-[acyl-carrier protein] methyl ester esterase from Shigella boydii serotype 18 (strain CDC 3083-94 / BS512).